The chain runs to 295 residues: Inorganic pyrophosphatase 1 (295 aa).

The active-site Nucleophile is the Asp-19. Mg(2+) contacts are provided by Asp-19 and Asp-21. The active-site Proton donor is Asp-21. Substrate contacts are provided by Asp-30 and Asp-105. Asp-190 provides a ligand contact to Mg(2+).

This sequence belongs to the HAD-like hydrolase superfamily. As to quaternary structure, tetramer. It depends on Mg(2+) as a cofactor. The cofactor is Fe(2+). Ni(2+) is required as a cofactor. Co(2+) serves as cofactor. Requires Mn(2+) as cofactor.

It carries out the reaction diphosphate + H2O = 2 phosphate + H(+). Its function is as follows. Catalyzes the specific cleavage of pyrophosphate. This chain is Inorganic pyrophosphatase 1 (PS2), found in Arabidopsis thaliana (Mouse-ear cress).